The sequence spans 437 residues: Adenylosuccinate synthetase (437 aa).

GTP contacts are provided by residues glycine 12–lysine 18 and glycine 40–threonine 42. The active-site Proton acceptor is the aspartate 13. Residues aspartate 13 and glycine 40 each coordinate Mg(2+). IMP-binding positions include aspartate 13–lysine 16, asparagine 38–histidine 41, threonine 131, arginine 145, glutamine 226, threonine 241, and arginine 305. Catalysis depends on histidine 41, which acts as the Proton donor. Alanine 301–arginine 307 provides a ligand contact to substrate. Residues arginine 307, lysine 333–aspartate 335, and serine 415–glycine 417 each bind GTP.

This sequence belongs to the adenylosuccinate synthetase family. Homodimer. Requires Mg(2+) as cofactor.

The protein resides in the cytoplasm. It carries out the reaction IMP + L-aspartate + GTP = N(6)-(1,2-dicarboxyethyl)-AMP + GDP + phosphate + 2 H(+). Its pathway is purine metabolism; AMP biosynthesis via de novo pathway; AMP from IMP: step 1/2. Its function is as follows. Plays an important role in the de novo pathway of purine nucleotide biosynthesis. Catalyzes the first committed step in the biosynthesis of AMP from IMP. The chain is Adenylosuccinate synthetase from Desulfotalea psychrophila (strain LSv54 / DSM 12343).